The sequence spans 101 residues: Small ribosomal subunit protein uS14A (101 aa).

Residues 31–69 (IAAPGSSPEERAAAQQELRRQPRDASATRLRNRDAVDGR) are disordered. Basic and acidic residues predominate over residues 38–53 (PEERAAAQQELRRQPR).

It belongs to the universal ribosomal protein uS14 family. Part of the 30S ribosomal subunit. Contacts proteins S3 and S10.

Its function is as follows. Binds 16S rRNA, required for the assembly of 30S particles and may also be responsible for determining the conformation of the 16S rRNA at the A site. The chain is Small ribosomal subunit protein uS14A from Saccharopolyspora erythraea (strain ATCC 11635 / DSM 40517 / JCM 4748 / NBRC 13426 / NCIMB 8594 / NRRL 2338).